Here is a 358-residue protein sequence, read N- to C-terminus: Protein-glutamate methylesterase/protein-glutamine glutaminase (358 aa).

The 118-residue stretch at 5 to 122 (SVLIIDDSAL…RNSLEAYTDE (118 aa)) folds into the Response regulatory domain. Asp56 is modified (4-aspartylphosphate). Positions 159-351 (GISTEKLIII…RRILARLVGA (193 aa)) constitute a CheB-type methylesterase domain. Catalysis depends on residues Ser171, His197, and Asp293.

This sequence belongs to the CheB family. Post-translationally, phosphorylated by CheA. Phosphorylation of the N-terminal regulatory domain activates the methylesterase activity.

Its subcellular location is the cytoplasm. It carries out the reaction [protein]-L-glutamate 5-O-methyl ester + H2O = L-glutamyl-[protein] + methanol + H(+). The catalysed reaction is L-glutaminyl-[protein] + H2O = L-glutamyl-[protein] + NH4(+). Involved in chemotaxis. Part of a chemotaxis signal transduction system that modulates chemotaxis in response to various stimuli. Catalyzes the demethylation of specific methylglutamate residues introduced into the chemoreceptors (methyl-accepting chemotaxis proteins or MCP) by CheR. Also mediates the irreversible deamidation of specific glutamine residues to glutamic acid. The chain is Protein-glutamate methylesterase/protein-glutamine glutaminase from Nitrosomonas europaea (strain ATCC 19718 / CIP 103999 / KCTC 2705 / NBRC 14298).